A 264-amino-acid chain; its full sequence is Virulence plasmid protein pGP3-D (264 aa).

The sequence is that of Virulence plasmid protein pGP3-D from Chlamydia trachomatis serovar L2 (strain ATCC VR-902B / DSM 19102 / 434/Bu).